A 159-amino-acid chain; its full sequence is Transcriptional repressor NrdR (159 aa).

The segment at 3–34 (CPFCNAADSKVIDSRLAAEGCQIRRRRECISC) is a zinc-finger region. The ATP-cone domain maps to 49–139 (PRVIKSNGKN…VYQDFQDVEA (91 aa)).

Belongs to the NrdR family. Zn(2+) serves as cofactor.

Its function is as follows. Negatively regulates transcription of bacterial ribonucleotide reductase nrd genes and operons by binding to NrdR-boxes. This is Transcriptional repressor NrdR from Acinetobacter baylyi (strain ATCC 33305 / BD413 / ADP1).